A 68-amino-acid polypeptide reads, in one-letter code: MNLIAAAIAIGLSALGAGIGNGLIVSRTVEGVARQPEARGQLMGIMFIGIGLVEALPIIGVVIAFMSL.

2 consecutive transmembrane segments (helical) span residues 4–24 (IAAA…NGLI) and 45–65 (IMFI…VIAF).

This sequence belongs to the ATPase C chain family. In terms of assembly, F-type ATPases have 2 components, F(1) - the catalytic core - and F(0) - the membrane proton channel. F(1) has five subunits: alpha(3), beta(3), gamma(1), delta(1), epsilon(1). F(0) has three main subunits: a(1), b(2) and c(10-14). The alpha and beta chains form an alternating ring which encloses part of the gamma chain. F(1) is attached to F(0) by a central stalk formed by the gamma and epsilon chains, while a peripheral stalk is formed by the delta and b chains.

It localises to the cell membrane. F(1)F(0) ATP synthase produces ATP from ADP in the presence of a proton or sodium gradient. F-type ATPases consist of two structural domains, F(1) containing the extramembraneous catalytic core and F(0) containing the membrane proton channel, linked together by a central stalk and a peripheral stalk. During catalysis, ATP synthesis in the catalytic domain of F(1) is coupled via a rotary mechanism of the central stalk subunits to proton translocation. Its function is as follows. Key component of the F(0) channel; it plays a direct role in translocation across the membrane. A homomeric c-ring of between 10-14 subunits forms the central stalk rotor element with the F(1) delta and epsilon subunits. This is ATP synthase subunit c from Staphylococcus saprophyticus subsp. saprophyticus (strain ATCC 15305 / DSM 20229 / NCIMB 8711 / NCTC 7292 / S-41).